The primary structure comprises 60 residues: Conotoxin PnMRCL-022 (60 aa).

The signal sequence occupies residues methionine 1–alanine 22. Residues arginine 23 to serine 45 constitute a propeptide that is removed on maturation.

This sequence belongs to the conotoxin T superfamily. In terms of processing, contains 2 disulfide bonds that can be either 'C1-C3, C2-C4' or 'C1-C4, C2-C3', since these disulfide connectivities have been observed for conotoxins with cysteine framework V (for examples, see AC P0DQQ7 and AC P81755). In terms of tissue distribution, expressed by the venom duct.

It is found in the secreted. The chain is Conotoxin PnMRCL-022 from Conus pennaceus (Feathered cone).